The following is a 1059-amino-acid chain: Microtubule-associated protein 1S (1059 aa).

The necessary for the microtubule-organizing center localization stretch occupies residues 1 to 797 (MAAVAGSGAA…SESLPTLSDS (797 aa)). A phosphoserine mark is found at Ser321 and Ser472. Disordered regions lie at residues 461–733 (PQDL…ASPH) and 751–942 (VPMA…SATP). 2 stretches are compositionally biased toward basic and acidic residues: residues 466–486 (GPGR…KREG) and 494–530 (PGQE…KDPK). Over residues 547–557 (SVPNLKKTNAQ) the composition is skewed to polar residues. Ser582 carries the phosphoserine modification. The span at 591–603 (ASPPSAACGSPAS) shows a compositional bias: low complexity. Phosphothreonine is present on Thr638. Ser640 bears the Phosphoserine mark. The span at 642–652 (ESHRSPAEGSE) shows a compositional bias: basic and acidic residues. 2 positions are modified to phosphoserine: Ser655 and Ser657. A necessary for interaction with RASSF1 isoform A and isoform C region spans residues 666-1059 (PDASPTVTTP…DAFPACKVEF (394 aa)). Positions 670-680 (PTVTTPTVTTP) are enriched in low complexity. The necessary for association with microtubules stretch occupies residues 714 to 966 (EAGLSLPLRG…GSSAHLVDEE (253 aa)). Ser731 and Ser759 each carry phosphoserine. Over residues 759–769 (SPGSSNDSSAR) the composition is skewed to low complexity. The segment covering 783 to 796 (PPTSVSESLPTLSD) has biased composition (polar residues). Ser809 is modified (phosphoserine). Residues 825–836 (PDPLKVPPPLPD) show a composition bias toward pro residues. Composition is skewed to low complexity over residues 873–887 (AAAP…AKTK) and 923–936 (TATR…SSRP). A necessary for association with actin region spans residues 960–1059 (AHLVDEEFFQ…DAFPACKVEF (100 aa)). The interval 967–991 (FFQRVRALCYVISGQDQRKEEGMRA) is necessary for the mitochondrial aggregation and genome destruction.

It belongs to the MAP1 family. As to quaternary structure, heterodimer of a heavy and a light chain. Interacts with microtubules and actin. Both MAP1S heavy and light chains interact with microtubules. MAP1S light chain interacts with actin. Interacts (via C-terminus) with GAN (via Kelch domains). Interacts with ESR1, LRPPRC, RASSF1 isoform A and isoform C, microtubules and VCY2. Interacts with WDR47 (via N-terminus of light chain). Expressed in neurons (at protein level). Expressed in spermatocytes, spermatids and spermatozoa. Expressed in the cerebral cortex. Highly expressed in testis. Moderately expressed in the brain, colon, heart, kidney, liver, lung, placenta, small intestine, spleen and stomach. Weakly expressed in muscle.

The protein resides in the nucleus. Its subcellular location is the cytoplasm. The protein localises to the cytosol. It localises to the cytoskeleton. It is found in the spindle. Functionally, microtubule-associated protein that mediates aggregation of mitochondria resulting in cell death and genomic destruction (MAGD). Plays a role in anchoring the microtubule organizing center to the centrosomes. Binds to DNA. Plays a role in apoptosis. Involved in the formation of microtubule bundles. In Homo sapiens (Human), this protein is Microtubule-associated protein 1S (MAP1S).